The sequence spans 212 residues: Root-specific lectin (212 aa).

An N-terminal signal peptide occupies residues 1 to 26; the sequence is MKMMSTRALALGAAAVLAFAAATAHA. The residue at position 27 (Gln-27) is a Pyrrolidone carboxylic acid. Chitin-binding type-1 domains are found at residues 27-68, 69-111, 112-154, and 155-197; these read QRCG…ACYT, SKRC…PCRA, DIKC…ACST, and DKPC…GCDG. Cystine bridges form between Cys-29/Cys-44, Cys-38/Cys-50, Cys-43/Cys-57, Cys-61/Cys-66, Cys-72/Cys-87, Cys-81/Cys-93, Cys-86/Cys-100, Cys-104/Cys-109, Cys-115/Cys-130, Cys-124/Cys-136, Cys-129/Cys-143, Cys-147/Cys-152, Cys-158/Cys-173, Cys-167/Cys-179, Cys-172/Cys-186, and Cys-190/Cys-195. 36 to 38 serves as a coordination point for substrate; that stretch reads MEC. 88–99 is a binding site for substrate; that stretch reads SQWGYCGFGAEY. Position 140-141 (140-141) interacts with substrate; the sequence is SE. A glycan (N-linked (GlcNAc...) asparagine) is linked at Asn-206.

As to expression, in roots.

Its function is as follows. Carbohydrate binding. This chain is Root-specific lectin, found in Hordeum vulgare (Barley).